Consider the following 260-residue polypeptide: DNA repair protein RecO (260 aa).

This sequence belongs to the RecO family.

In terms of biological role, involved in DNA repair and RecF pathway recombination. This chain is DNA repair protein RecO, found in Salinibacter ruber (strain DSM 13855 / M31).